A 177-amino-acid chain; its full sequence is Adenine phosphoribosyltransferase (177 aa).

This sequence belongs to the purine/pyrimidine phosphoribosyltransferase family. In terms of assembly, homodimer.

It is found in the cytoplasm. It carries out the reaction AMP + diphosphate = 5-phospho-alpha-D-ribose 1-diphosphate + adenine. Its pathway is purine metabolism; AMP biosynthesis via salvage pathway; AMP from adenine: step 1/1. Its function is as follows. Catalyzes a salvage reaction resulting in the formation of AMP, that is energically less costly than de novo synthesis. This is Adenine phosphoribosyltransferase from Rhodococcus opacus (strain B4).